The following is a 113-amino-acid chain: Putative pterin-4-alpha-carbinolamine dehydratase (113 aa).

This sequence belongs to the pterin-4-alpha-carbinolamine dehydratase family.

It carries out the reaction (4aS,6R)-4a-hydroxy-L-erythro-5,6,7,8-tetrahydrobiopterin = (6R)-L-erythro-6,7-dihydrobiopterin + H2O. This is Putative pterin-4-alpha-carbinolamine dehydratase from Nitrosomonas eutropha (strain DSM 101675 / C91 / Nm57).